The sequence spans 489 residues: Phenylalanine--tRNA ligase alpha subunit (489 aa).

L-phenylalanine-binding positions include Thr-316, 355 to 357, Phe-395, and Phe-420; that span reads QLD.

This sequence belongs to the class-II aminoacyl-tRNA synthetase family. Phe-tRNA synthetase alpha subunit type 2 subfamily. Tetramer of two alpha and two beta subunits. It depends on Mg(2+) as a cofactor.

Its subcellular location is the cytoplasm. It carries out the reaction tRNA(Phe) + L-phenylalanine + ATP = L-phenylalanyl-tRNA(Phe) + AMP + diphosphate + H(+). This chain is Phenylalanine--tRNA ligase alpha subunit, found in Pyrobaculum aerophilum (strain ATCC 51768 / DSM 7523 / JCM 9630 / CIP 104966 / NBRC 100827 / IM2).